Here is a 163-residue protein sequence, read N- to C-terminus: Ribonuclease P protein component 4 (163 aa).

4 residues coordinate Zn(2+): C66, C69, C96, and C99. The disordered stretch occupies residues G110–D163. Over residues Q152–D163 the composition is skewed to gly residues.

It belongs to the eukaryotic/archaeal RNase P protein component 4 family. As to quaternary structure, consists of a catalytic RNA component and at least 4-5 protein subunits. It depends on Zn(2+) as a cofactor.

The protein resides in the cytoplasm. It carries out the reaction Endonucleolytic cleavage of RNA, removing 5'-extranucleotides from tRNA precursor.. Functionally, part of ribonuclease P, a protein complex that generates mature tRNA molecules by cleaving their 5'-ends. The polypeptide is Ribonuclease P protein component 4 (Aeropyrum pernix (strain ATCC 700893 / DSM 11879 / JCM 9820 / NBRC 100138 / K1)).